Here is a 118-residue protein sequence, read N- to C-terminus: Large ribosomal subunit protein uL22 (118 aa).

It belongs to the universal ribosomal protein uL22 family. As to quaternary structure, part of the 50S ribosomal subunit.

This protein binds specifically to 23S rRNA; its binding is stimulated by other ribosomal proteins, e.g. L4, L17, and L20. It is important during the early stages of 50S assembly. It makes multiple contacts with different domains of the 23S rRNA in the assembled 50S subunit and ribosome. In terms of biological role, the globular domain of the protein is located near the polypeptide exit tunnel on the outside of the subunit, while an extended beta-hairpin is found that lines the wall of the exit tunnel in the center of the 70S ribosome. The sequence is that of Large ribosomal subunit protein uL22 from Pediococcus pentosaceus (strain ATCC 25745 / CCUG 21536 / LMG 10740 / 183-1w).